Reading from the N-terminus, the 570-residue chain is Sulfite reductase [NADPH] hemoprotein beta-component (570 aa).

The [4Fe-4S] cluster site is built by Cys434, Cys440, Cys479, and Cys483. Cys483 lines the siroheme pocket.

This sequence belongs to the nitrite and sulfite reductase 4Fe-4S domain family. As to quaternary structure, alpha(8)-beta(8). The alpha component is a flavoprotein, the beta component is a hemoprotein. Siroheme serves as cofactor. [4Fe-4S] cluster is required as a cofactor.

It carries out the reaction hydrogen sulfide + 3 NADP(+) + 3 H2O = sulfite + 3 NADPH + 4 H(+). It participates in sulfur metabolism; hydrogen sulfide biosynthesis; hydrogen sulfide from sulfite (NADPH route): step 1/1. Component of the sulfite reductase complex that catalyzes the 6-electron reduction of sulfite to sulfide. This is one of several activities required for the biosynthesis of L-cysteine from sulfate. This Shigella sonnei (strain Ss046) protein is Sulfite reductase [NADPH] hemoprotein beta-component.